The primary structure comprises 1449 residues: ABC transporter G family member 21 (1449 aa).

Positions 1-10 (MEEYELREIA) are enriched in basic and acidic residues. Positions 1–49 (MEEYELREIALQEGGSNLDINTPPNYDNPVGDGSSPPDSPDIQKSENQF) are disordered. Over residues 14 to 25 (GGSNLDINTPPN) the composition is skewed to polar residues. The region spanning 130-383 (ISFFNLFKPS…FIDLGFDCEP (254 aa)) is the ABC transporter 1 domain. The ABC transmembrane type-2 1 domain maps to 488-731 (WGDKFSLISR…ILSVEGKDYL (244 aa)). The next 5 helical transmembrane spans lie at 519 to 539 (IPGL…NAFL), 577 to 597 (IPLT…MFGL), 602 to 622 (GKFF…TNLF), 634 to 654 (ISQN…GYTI), and 747 to 767 (FITY…MEYF). Residues 818 to 1062 (FTWQNINYTV…LTSYFERYGV (245 aa)) form the ABC transporter 2 domain. 854–861 (GSSGAGKT) lines the ATP pocket. Residues 1152-1386 (FYTYGSFIQS…PISEPLTGYV (235 aa)) enclose the ABC transmembrane type-2 2 domain. 6 helical membrane-spanning segments follow: residues 1155–1175 (YGSF…FWSL), 1188–1208 (FIFE…PQFI), 1228–1248 (FAIS…TIFF), 1266–1286 (FYFW…GQAV), 1296–1316 (AHTL…VMVI), and 1423–1443 (LALI…FVYI).

The protein belongs to the ABC transporter superfamily. ABCG family. PDR (TC 3.A.1.205) subfamily.

The protein localises to the membrane. This Dictyostelium discoideum (Social amoeba) protein is ABC transporter G family member 21 (abcG21).